Reading from the N-terminus, the 357-residue chain is tRNA-specific 2-thiouridylase MnmA (357 aa).

ATP-binding positions include 7–14 (AMSGGVDS) and methionine 33. Cysteine 101 (nucleophile) is an active-site residue. Cysteine 101 and cysteine 198 are joined by a disulfide. Glycine 125 contacts ATP. The interval 148 to 150 (KDQ) is interaction with tRNA. The active-site Cysteine persulfide intermediate is the cysteine 198.

This sequence belongs to the MnmA/TRMU family.

Its subcellular location is the cytoplasm. It catalyses the reaction S-sulfanyl-L-cysteinyl-[protein] + uridine(34) in tRNA + AH2 + ATP = 2-thiouridine(34) in tRNA + L-cysteinyl-[protein] + A + AMP + diphosphate + H(+). In terms of biological role, catalyzes the 2-thiolation of uridine at the wobble position (U34) of tRNA, leading to the formation of s(2)U34. The protein is tRNA-specific 2-thiouridylase MnmA of Herpetosiphon aurantiacus (strain ATCC 23779 / DSM 785 / 114-95).